The primary structure comprises 184 residues: Inorganic pyrophosphatase (184 aa).

Positions 19, 33, and 45 each coordinate substrate. Positions 55, 60, and 92 each coordinate Mg(2+). Residue tyrosine 129 participates in substrate binding.

Belongs to the PPase family. Homohexamer. Requires Mg(2+) as cofactor.

The protein localises to the cytoplasm. The catalysed reaction is diphosphate + H2O = 2 phosphate + H(+). In terms of biological role, catalyzes the hydrolysis of inorganic pyrophosphate (PPi) forming two phosphate ions. This is Inorganic pyrophosphatase from Mycoplasma genitalium (strain ATCC 33530 / DSM 19775 / NCTC 10195 / G37) (Mycoplasmoides genitalium).